The following is a 133-amino-acid chain: Fatty acid-binding protein, heart (133 aa).

Val-2 carries the post-translational modification N-acetylvaline. Thr-8 carries the phosphothreonine modification. At Tyr-20 the chain carries Phosphotyrosine; by Tyr-kinases. At Ser-23 the chain carries Phosphoserine. Residue Thr-30 is modified to Phosphothreonine. Ser-83 is subject to Phosphoserine. 127–129 (RTY) lines the (9Z)-octadecenoate pocket. Position 127-129 (127-129 (RTY)) interacts with hexadecanoate. Position 127 to 129 (127 to 129 (RTY)) interacts with octadecanoate.

Belongs to the calycin superfamily. Fatty-acid binding protein (FABP) family.

Its subcellular location is the cytoplasm. Its function is as follows. FABPs are thought to play a role in the intracellular transport of long-chain fatty acids and their acyl-CoA esters. This Homo sapiens (Human) protein is Fatty acid-binding protein, heart (FABP3).